The primary structure comprises 457 residues: Fibrinogen C domain-containing protein 1 (457 aa).

The disordered stretch occupies residues 1-20; it reads MGSDRWKNIGGAPQMEDSVQ. The Cytoplasmic segment spans residues 1-33; that stretch reads MGSDRWKNIGGAPQMEDSVQDKSQRKGCGYILC. Residues 34-54 traverse the membrane as a helical; Signal-anchor for type II membrane protein segment; the sequence is TVLLSVAVLLAVTVTGAVLFM. Over 55–457 the chain is Extracellular; that stretch reads NHYHAPSTEP…MKIRPQREEN (403 aa). A disordered region spans residues 211 to 235; it reads RPRVKADLQRAPSRSSRPRGCANGS. The 224-residue stretch at 231 to 454 folds into the Fibrinogen C-terminal domain; sequence CANGSKPRDC…FTEMKIRPQR (224 aa). Asparagine 233 is a glycosylation site (N-linked (GlcNAc...) asparagine). An intrachain disulfide couples cysteine 240 to cysteine 269. A glycan (N-linked (GlcNAc...) asparagine) is linked at asparagine 336. The Ca(2+) site is built by aspartate 389 and aspartate 391. Cysteine 397 and cysteine 410 are joined by a disulfide.

Homotetramer; disulfide-linked.

The protein localises to the membrane. Acetyl group-binding receptor which shows a calcium-dependent binding to acetylated structures such as chitin, some N-acetylated carbohydrates, and amino acids. This chain is Fibrinogen C domain-containing protein 1 (fibcd1), found in Xenopus tropicalis (Western clawed frog).